The following is a 273-amino-acid chain: Dermonecrotic toxin LhSicTox-alphaIA1iii (273 aa).

Histidine 5 is an active-site residue. The Mg(2+) site is built by glutamate 25 and aspartate 27. Histidine 41 acts as the Nucleophile in catalysis. Cystine bridges form between cysteine 45–cysteine 51 and cysteine 47–cysteine 190. Aspartate 85 contributes to the Mg(2+) binding site.

It belongs to the arthropod phospholipase D family. Class II subfamily. Mg(2+) is required as a cofactor. As to expression, expressed by the venom gland.

The protein localises to the secreted. It catalyses the reaction an N-(acyl)-sphingosylphosphocholine = an N-(acyl)-sphingosyl-1,3-cyclic phosphate + choline. It carries out the reaction an N-(acyl)-sphingosylphosphoethanolamine = an N-(acyl)-sphingosyl-1,3-cyclic phosphate + ethanolamine. The enzyme catalyses a 1-acyl-sn-glycero-3-phosphocholine = a 1-acyl-sn-glycero-2,3-cyclic phosphate + choline. The catalysed reaction is a 1-acyl-sn-glycero-3-phosphoethanolamine = a 1-acyl-sn-glycero-2,3-cyclic phosphate + ethanolamine. Its function is as follows. Dermonecrotic toxins cleave the phosphodiester linkage between the phosphate and headgroup of certain phospholipids (sphingolipid and lysolipid substrates), forming an alcohol (often choline) and a cyclic phosphate. This toxin acts on sphingomyelin (SM). It may also act on ceramide phosphoethanolamine (CPE), lysophosphatidylcholine (LPC) and lysophosphatidylethanolamine (LPE), but not on lysophosphatidylserine (LPS), and lysophosphatidylglycerol (LPG). It acts by transphosphatidylation, releasing exclusively cyclic phosphate products as second products. Induces dermonecrosis, hemolysis, increased vascular permeability, edema, inflammatory response, and platelet aggregation. The sequence is that of Dermonecrotic toxin LhSicTox-alphaIA1iii from Loxosceles hirsuta (Recluse spider).